The primary structure comprises 203 residues: Non-specific lipid transfer protein GPI-anchored 20 (203 aa).

Residues M1 to G21 form the signal peptide. 4 cysteine pairs are disulfide-bonded: C29-C74, C40-C58, C59-C99, and C72-C108. N-linked (GlcNAc...) asparagine glycans are attached at residues N46, N50, and N88. The segment at G119–S182 is disordered. Polar residues-rich tracts occupy residues A144–F156 and D169–T179. S172 carries the GPI-anchor amidated serine lipid modification. Residues T173–Y203 constitute a propeptide, removed in mature form.

This sequence belongs to the plant LTP family. Expressed in seedlings, preferentially in hypocotyls and roots. Also observed in siliques and sepals.

The protein resides in the cell membrane. Probable lipid transfer protein. The protein is Non-specific lipid transfer protein GPI-anchored 20 of Arabidopsis thaliana (Mouse-ear cress).